The sequence spans 431 residues: Na(+)-translocating NADH-quinone reductase subunit F (431 aa).

A helical transmembrane segment spans residues 10-30 (IFIASTAFCALGLLLVAIILL). One can recognise a 2Fe-2S ferredoxin-type domain in the interval 41 to 133 (CKLRINNDDS…DMNLEIEERY (93 aa)). [2Fe-2S] cluster contacts are provided by Cys76, Cys82, Cys85, and Cys117. Positions 136–286 (ASSWEGTVVS…SGPYGESFMK (151 aa)) constitute an FAD-binding FR-type domain. The tract at residues 289–413 (NRPVIFLIGG…ALHNSSILTL (125 aa)) is catalytic.

The protein belongs to the NqrF family. In terms of assembly, composed of six subunits; NqrA, NqrB, NqrC, NqrD, NqrE and NqrF. The cofactor is [2Fe-2S] cluster. FAD serves as cofactor.

The protein localises to the cell inner membrane. The catalysed reaction is a ubiquinone + n Na(+)(in) + NADH + H(+) = a ubiquinol + n Na(+)(out) + NAD(+). Its function is as follows. NQR complex catalyzes the reduction of ubiquinone-1 to ubiquinol by two successive reactions, coupled with the transport of Na(+) ions from the cytoplasm to the periplasm. The first step is catalyzed by NqrF, which accepts electrons from NADH and reduces ubiquinone-1 to ubisemiquinone by a one-electron transfer pathway. This is Na(+)-translocating NADH-quinone reductase subunit F from Chlamydia muridarum (strain MoPn / Nigg).